Reading from the N-terminus, the 243-residue chain is 1-(5-phosphoribosyl)-5-[(5-phosphoribosylamino)methylideneamino] imidazole-4-carboxamide isomerase (243 aa).

Asp-10 functions as the Proton acceptor in the catalytic mechanism. Asp-129 serves as the catalytic Proton donor.

It belongs to the HisA/HisF family.

It is found in the cytoplasm. The catalysed reaction is 1-(5-phospho-beta-D-ribosyl)-5-[(5-phospho-beta-D-ribosylamino)methylideneamino]imidazole-4-carboxamide = 5-[(5-phospho-1-deoxy-D-ribulos-1-ylimino)methylamino]-1-(5-phospho-beta-D-ribosyl)imidazole-4-carboxamide. The protein operates within amino-acid biosynthesis; L-histidine biosynthesis; L-histidine from 5-phospho-alpha-D-ribose 1-diphosphate: step 4/9. The sequence is that of 1-(5-phosphoribosyl)-5-[(5-phosphoribosylamino)methylideneamino] imidazole-4-carboxamide isomerase from Nocardia farcinica (strain IFM 10152).